The chain runs to 137 residues: Diacylglycerol kinase (137 aa).

A divalent metal cation is bound at residue Glu42. The next 2 helical transmembrane spans lie at 49–67 (LIAFAAAMIAFIIVGATFF) and 73–89 (AILFLLMMAFEAINTAI). Glu83 functions as the Proton acceptor in the catalytic mechanism. Position 90 (Glu90) interacts with a divalent metal cation. A helical transmembrane segment spans residues 112–132 (SFACLCLIVANGVYAAYVVIF).

It belongs to the bacterial diacylglycerol kinase family. Requires Mg(2+) as cofactor.

The protein resides in the cell inner membrane. It catalyses the reaction a 1,2-diacyl-sn-glycerol + ATP = a 1,2-diacyl-sn-glycero-3-phosphate + ADP + H(+). Functionally, catalyzes the ATP-dependent phosphorylation of sn-l,2-diacylglycerol (DAG) to phosphatidic acid. Involved in the recycling of diacylglycerol produced as a by-product during membrane-derived oligosaccharide (MDO) biosynthesis. This chain is Diacylglycerol kinase (dgkA), found in Sinorhizobium sp.